Here is a 1172-residue protein sequence, read N- to C-terminus: NACHT, LRR and PYD domains-containing protein 1b allele 3 (1172 aa).

A disordered region spans residues 1–22 (MEESPPKQKSNTKVAQHEGQQD). The NACHT domain maps to 126 to 435 (QLVIIEGAAG…EFFAAISCIL (310 aa)). 132–139 (GAAGIGKS) is an ATP binding site. LRR repeat units lie at residues 627–647 (NLEGLDLSGNSLRYSVVQSLC) and 684–704 (SLTELYLQLNDLGDDGVRMLC). A ZU5 region spans residues 789 to 922 (FWGPTGPVAT…GYTVLKNPSF (134 aa)). The 284-residue stretch at 789–1072 (FWGPTGPVAT…LRPALPRIAQ (284 aa)) folds into the FIIND domain. The tract at residues 923–1072 (SPMGDVLRII…LRPALPRIAQ (150 aa)) is UPA. The region spanning 1082–1165 (HFMDQHREQL…HLVMDLLEKS (84 aa)) is the CARD domain.

The protein belongs to the NLRP family. Post-translationally, in contrast to allele 1 and 2, not able to mediate autocatalytic cleavage. As to expression, expressed in macrophages.

It localises to the cytoplasm. It is found in the cytosol. Its activity is regulated as follows. In contrast to allele 1, does not undergo autocatalytic cleavage within the FIIND domain and its mode of activation remains unclear. In contrast to alleles 1 and 2, allele 3 is not activated by Val-boroPro (Talabostat, PT-100). Not activated by cleavage by B.anthracis lethal toxin (LT) endopeptidase. Not activated by metabolic inhibitors, such as 2-deoxy-D-glucose and sodium azide. May act as the sensor component of the Nlrp1b inflammasome, which mediates inflammasome activation in response to various pathogen-associated signals, leading to subsequent pyroptosis. Inflammasomes are supramolecular complexes that assemble in the cytosol in response to pathogens and other damage-associated signals and play critical roles in innate immunity and inflammation. May act as a recognition receptor (PRR), which recognizes specific pathogens and other damage-associated signals and forms an inflammasome complex: the inflammasome directly recruits pro-caspase-1 (proCASP1) independently of PYCARD/ASC and promotes caspase-1 (CASP1) activation, which subsequently cleaves and activates inflammatory cytokines IL1B and IL18 and gasdermin-D (GSDMD), leading to pyroptosis. In the absence of GSDMD expression, the Nlrp1b inflammasome is able to recruit and activate CASP8, leading to activation of gasdermin-E (GSDME). Contrary to Nlrp1b allele 1, allele 3 is not activated by Bacillus anthracis lethal toxin. The absence of autocatalytic cleavage within the FIIND domain, which regulates activation in other alleles, suggests that allele 3 may be non-functional. The sequence is that of NACHT, LRR and PYD domains-containing protein 1b allele 3 from Mus musculus (Mouse).